Consider the following 358-residue polypeptide: NADH-quinone oxidoreductase subunit H (358 aa).

8 consecutive transmembrane segments (helical) span residues 20-40, 95-115, 128-148, 168-188, 206-226, 253-273, 295-315, and 334-354; these read ITVGLVVSVIVKIVIILIPLI, ALFYIGPIMSLAPSFAAWAVI, IGLLYILMITSLSVYGVIIAG, ISYEIAMSAALVCVVMVSGSM, VFSWNWLPLFPIFIVYLISAV, GFAFALFFLAEYIFMILIAAL, TPSAFWMFAKMAAVLYWYLWI, and VLIPIGFAYIVILGVWMISPL.

The protein belongs to the complex I subunit 1 family. NDH-1 is composed of 14 different subunits. Subunits NuoA, H, J, K, L, M, N constitute the membrane sector of the complex.

It localises to the cell inner membrane. It carries out the reaction a quinone + NADH + 5 H(+)(in) = a quinol + NAD(+) + 4 H(+)(out). In terms of biological role, NDH-1 shuttles electrons from NADH, via FMN and iron-sulfur (Fe-S) centers, to quinones in the respiratory chain. The immediate electron acceptor for the enzyme in this species is believed to be ubiquinone. Couples the redox reaction to proton translocation (for every two electrons transferred, four hydrogen ions are translocated across the cytoplasmic membrane), and thus conserves the redox energy in a proton gradient. This subunit may bind ubiquinone. This Neisseria meningitidis serogroup B (strain ATCC BAA-335 / MC58) protein is NADH-quinone oxidoreductase subunit H.